The primary structure comprises 427 residues: Zinc-finger homeodomain protein 7 (427 aa).

Disordered stretches follow at residues 1 to 60 (MEYK…SLMD) and 91 to 118 (LHAAHHHGQGRRVEAPGGESQHHLQRHH). The span at 10-28 (EEEEEEEEEEDDEEEDEEE) shows a compositional bias: acidic residues. Low complexity predominate over residues 50–60 (SSASSPSSLMD). A ZF-HD dimerization-type; degenerate zinc finger spans residues 163–211 (YRECLKNHAARMGAHVLDGCGEFMSSPGDGAAALACAACGCHRSFHRRE). Disordered stretches follow at residues 264–320 (KRPP…SKKR) and 375–427 (HLAK…QHDA). Composition is skewed to low complexity over residues 271 to 283 (VSPASAPAALAES) and 301 to 312 (HAAAVVAASASA). Positions 318–381 (KKRFRTKFTA…NNKHLAKTPP (64 aa)) form a DNA-binding region, homeobox. Pro residues predominate over residues 380–401 (PPSPTSQPPPPPLHHDPSPPPP). The segment covering 402–416 (PHHHHHHHHHHHPPQ) has biased composition (basic residues). The span at 417–427 (HHQQQQQQHDA) shows a compositional bias: low complexity.

Homo- and heterodimer with other ZFHD proteins.

Its subcellular location is the nucleus. Putative transcription factor. This is Zinc-finger homeodomain protein 7 (ZHD7) from Oryza sativa subsp. japonica (Rice).